Consider the following 358-residue polypeptide: Protein phosphatase 1 regulatory subunit 3G (358 aa).

The interval 1 to 71 (MEPIGARLSL…KEEAAPQEQE (71 aa)) is disordered. Over residues 11-29 (EAPGPAPFREAPPAEELPA) the composition is skewed to low complexity. Position 86 is a phosphoserine (Ser-86). Positions 210-350 (AERLQRQRVC…NNAGANYTLR (141 aa)) constitute a CBM21 domain. The span at 270–280 (EPLEPQQPEAP) shows a compositional bias: low complexity. The disordered stretch occupies residues 270-295 (EPLEPQQPEAPSGASEPGSGDAKKEP).

In terms of biological role, glycogen-targeting subunit for protein phosphatase 1 (PP1). Involved in the regulation of hepatic glycogenesis in a manner coupled to the fasting-feeding cycle and distinct from other glycogen-targeting subunits. In Homo sapiens (Human), this protein is Protein phosphatase 1 regulatory subunit 3G (PPP1R3G).